The chain runs to 277 residues: Large ribosomal subunit protein uL2c (277 aa).

The span at 1-11 (MNTRSYSTFTP) shows a compositional bias: polar residues. 2 disordered regions span residues 1–47 (MNTR…RNNS) and 254–277 (YSAL…RRRK).

It belongs to the universal ribosomal protein uL2 family. In terms of assembly, part of the 50S ribosomal subunit.

The protein localises to the plastid. The protein resides in the chloroplast. The sequence is that of Large ribosomal subunit protein uL2c (rpl2) from Cryptomeria japonica (Japanese cedar).